The chain runs to 1042 residues: Exosome RNA helicase MTR4 (1042 aa).

Ala2 bears the N-acetylalanine mark. Residues 16-74 (DSTTAAGTKKDKEKDKGKWKGPPGSADKAGKRFDGKLQSESTNNGKNKRDVDFEGTDEP) form a disordered region. A compositionally biased stretch (basic and acidic residues) spans 23-33 (TKKDKEKDKGK). Lys24 is covalently cross-linked (Glycyl lysine isopeptide (Lys-Gly) (interchain with G-Cter in SUMO2)). Ser40 is modified (phosphoserine). Basic and acidic residues predominate over residues 43 to 52 (KAGKRFDGKL). Lys51 and Lys78 each carry N6-acetyllysine. ATP is bound by residues Ile139, 161-168 (AHTSAGKT), Ser164, Gly166, Lys167, and Thr168. The 157-residue stretch at 148–304 (IQCVDNNQSV…WICHLHKQPC (157 aa)) folds into the Helicase ATP-binding domain. A DEIH box motif is present at residues 252–255 (DEIH). A Glycyl lysine isopeptide (Lys-Gly) (interchain with G-Cter in SUMO2) cross-link involves residue Lys358. The 173-residue stretch at 405–577 (QMTKLDFNTD…NMVLNLLRVE (173 aa)) folds into the Helicase C-terminal domain. Residues Lys684 and Lys723 each participate in a glycyl lysine isopeptide (Lys-Gly) (interchain with G-Cter in SUMO2) cross-link.

This sequence belongs to the helicase family. SKI2 subfamily. As to quaternary structure, component of a TRAMP-like complex, an ATP-dependent exosome regulatory complex consisting of a helicase (MTREX), an oligadenylate polymerase (TENT4B or TENT4A), and a substrate specific RNA-binding factor (ZCCHC7 or ZCCHC8). Several TRAMP-like complexes exist with specific compositions and are associated with nuclear, or nucleolar RNA exosomes. Identified in the spliceosome C complex. Component of the poly(A) tail exosome targeting (PAXT) complex made of PABPN1, ZFC3H1 and MTREX that directs a subset of long and polyadenylated poly(A) RNAs for exosomal degradation. Component of the nuclear exosome targeting (NEXT) complex composed of MTREX, ZCCHC8, and RBM7 that directs a subset of non-coding short-lived RNAs for exosomal degradation. Interacts with ZCCHC8; this interaction bridges the interaction between RBM7 and MTREX. Binds to ZFC3H1 and RBM7 in a RNase-insensitive manner. Interacts with EXOSC10; the interaction mediates the association of MTREX with nuclear RNA exosomes. Interacts with isoform 1 of NVL in an ATP-dependent manner; the interaction is required to associate NVL with nuclear RNA exosome. Interacts with WDR74; the interaction dissociation in a late stage of rRNA synthesis is required for appropriate maturation of pre-60S particles and depends on the ATPase activity of NVL. Interacts with MPHOSPH6. Interacts with the RNA cap-binding complex proteins NCBP1 and SRRT. Interacts with NRDE2; the interaction is direct and negatively regulates MTREX function in exosomal degradation by changing its conformation precluding interaction with ZFC3H1, the RNA cap-binding complex proteins NCBP1 and SRRT, and association with the exosome. Associates with the RNA exosome complex.

Its subcellular location is the nucleus. The protein resides in the nucleoplasm. The protein localises to the nucleolus. It is found in the nucleus speckle. It carries out the reaction ATP + H2O = ADP + phosphate + H(+). Its activity is regulated as follows. Activated when MTREX is incorporated into NEXT complex an the nuclear RNA exosome complex. In terms of biological role, catalyzes the ATP-dependent unwinding of RNA duplexes with a single-stranded 3' RNA extension. Central subunit of many protein complexes, namely TRAMP-like, nuclear exosome targeting (NEXT) and poly(A) tail exosome targeting (PAXT). NEXT functions as an RNA exosome cofactor that directs a subset of non-coding short-lived RNAs for exosomal degradation. NEXT is involved in surveillance and turnover of aberrant transcripts and non-coding RNAs. PAXT directs a subset of long and polyadenylated poly(A) RNAs for exosomal degradation. The RNA exosome is fundamental for the degradation of RNA in eukaryotic nuclei. Substrate targeting is facilitated by its cofactor ZCCHC8, which links to RNA-binding protein adapters. Associated with the RNA exosome complex and involved in the 3'-processing of the 7S pre-RNA to the mature 5.8S rRNA. May be involved in pre-mRNA splicing. In the context of NEXT complex can also in vitro unwind DNA:RNA heteroduplexes with a 3' poly (A) RNA tracking strand. Can promote unwinding and degradation of structured RNA substrates when associated with the nuclear exosome and its cofactors. Can displace a DNA strand while translocating on RNA to ultimately degrade the RNA within a DNA/RNA heteroduplex. Plays a role in DNA damage response. This Homo sapiens (Human) protein is Exosome RNA helicase MTR4.